A 298-amino-acid polypeptide reads, in one-letter code: ATP phosphoribosyltransferase (298 aa).

The protein belongs to the ATP phosphoribosyltransferase family. Long subfamily. It depends on Mg(2+) as a cofactor.

The protein resides in the cytoplasm. The enzyme catalyses 1-(5-phospho-beta-D-ribosyl)-ATP + diphosphate = 5-phospho-alpha-D-ribose 1-diphosphate + ATP. It functions in the pathway amino-acid biosynthesis; L-histidine biosynthesis; L-histidine from 5-phospho-alpha-D-ribose 1-diphosphate: step 1/9. Its activity is regulated as follows. Feedback inhibited by histidine. Functionally, catalyzes the condensation of ATP and 5-phosphoribose 1-diphosphate to form N'-(5'-phosphoribosyl)-ATP (PR-ATP). Has a crucial role in the pathway because the rate of histidine biosynthesis seems to be controlled primarily by regulation of HisG enzymatic activity. In Aliivibrio fischeri (strain MJ11) (Vibrio fischeri), this protein is ATP phosphoribosyltransferase.